Here is a 270-residue protein sequence, read N- to C-terminus: tRNA pseudouridine synthase A (270 aa).

The active-site Nucleophile is aspartate 60. Residues 107-111 (FHARF) form an RNA binding region. Tyrosine 118 is a binding site for substrate. The interaction with tRNA stretch occupies residues 168 to 172 (QCQSR).

This sequence belongs to the tRNA pseudouridine synthase TruA family. As to quaternary structure, homodimer.

It carries out the reaction uridine(38/39/40) in tRNA = pseudouridine(38/39/40) in tRNA. Formation of pseudouridine at positions 38, 39 and 40 in the anticodon stem and loop of transfer RNAs. This Shigella boydii serotype 4 (strain Sb227) protein is tRNA pseudouridine synthase A.